Consider the following 451-residue polypeptide: Chromosomal replication initiator protein DnaA (451 aa).

The interval 1 to 73 (MNAHPKEIWE…IRSLQMVTSQ (73 aa)) is domain I, interacts with DnaA modulators. Residues 73-112 (QKYNVKFLISSELPEEFLTLDTINEQNIKGSIIVSDEMSA) are domain II. Positions 113-329 (MLNPKYTFTS…GALIRIVAFS (217 aa)) are domain III, AAA+ region. ATP contacts are provided by glycine 157, glycine 159, lysine 160, and threonine 161. Positions 330-451 (SLTNKEISVD…NDLTKRLDQQ (122 aa)) are domain IV, binds dsDNA.

Belongs to the DnaA family. As to quaternary structure, oligomerizes as a right-handed, spiral filament on DNA at oriC.

Its subcellular location is the cytoplasm. Functionally, plays an essential role in the initiation and regulation of chromosomal replication. ATP-DnaA binds to the origin of replication (oriC) to initiate formation of the DNA replication initiation complex once per cell cycle. Binds the DnaA box (a 9 base pair repeat at the origin) and separates the double-stranded (ds)DNA. Forms a right-handed helical filament on oriC DNA; dsDNA binds to the exterior of the filament while single-stranded (ss)DNA is stabiized in the filament's interior. The ATP-DnaA-oriC complex binds and stabilizes one strand of the AT-rich DNA unwinding element (DUE), permitting loading of DNA polymerase. After initiation quickly degrades to an ADP-DnaA complex that is not apt for DNA replication. Binds acidic phospholipids. This chain is Chromosomal replication initiator protein DnaA, found in Clostridium kluyveri (strain NBRC 12016).